Here is a 100-residue protein sequence, read N- to C-terminus: Large ribosomal subunit protein bL28 (100 aa).

This sequence belongs to the bacterial ribosomal protein bL28 family.

The chain is Large ribosomal subunit protein bL28 from Ehrlichia ruminantium (strain Gardel).